Consider the following 1038-residue polypeptide: Probable LRR receptor-like serine/threonine-protein kinase At1g53430 (1038 aa).

Positions 1–28 (MGFIFSTEKVVYVLLLIFVCLENFGSNA) are cleaved as a signal peptide. At 29–609 (QLLPEDEVQT…VDTGKPLSNG (581 aa)) the chain is on the extracellular side. N-linked (GlcNAc...) asparagine glycosylation is found at asparagine 48, asparagine 77, asparagine 85, asparagine 112, and asparagine 127. LRR repeat units follow at residues 113-137 (LTRLREIDLSRNFLNGTIPTTLSQI), 139-160 (LEILSVIGNRLSGPFPPQLGDI), 161-184 (TTLTDVNLETNLFTGPLPRNLGNL), 185-208 (RSLKELLLSANNFTGQIPESLSNL), 210-234 (NLTEFRIDGNSLSGKIPDFIGNWTL), and 236-256 (ERLDLQGTSMEGPIPPSISNL). N-linked (GlcNAc...) asparagine glycans are attached at residues asparagine 196, asparagine 210, asparagine 231, asparagine 255, and asparagine 258. LRR repeat units lie at residues 259–281 (LTELRITDLRGQAAFSFPDLRNL), 282–305 (MKMKRLVLRNCLIRGPIPEYIGSM), 306–328 (SELKTLDLSSNMLTGVIPDTFRN), 330–351 (DAFNFMFLNNNSLTGPVPQFII), and 352–374 (NSKENLDLSDNNFTQPPTLSCNQ). N-linked (GlcNAc...) asparagine glycans are attached at residues asparagine 339, asparagine 363, asparagine 471, and asparagine 561. The chain crosses the membrane as a helical span at residues 610 to 630 (AVAGIVIAACAVFGLLVLVIL). The Cytoplasmic portion of the chain corresponds to 631–1038 (RLTGYLGGKE…LDDLTDVKIE (408 aa)). Residue threonine 658 is modified to Phosphothreonine. The Protein kinase domain occupies 669–950 (FDPENKIGEG…EGKIKVQPPL (282 aa)). Residues 675-683 (IGEGGFGPV) and lysine 697 each bind ATP. A Phosphotyrosine modification is found at tyrosine 742. The active-site Proton acceptor is the aspartate 795. Serine 828 is modified (phosphoserine). 2 positions are modified to phosphothreonine: threonine 829 and threonine 834. Position 842 is a phosphotyrosine (tyrosine 842). The tract at residues 984 to 1038 (RNREQDISSSSMDGPWVDSSFSEPGKDVSLQQQEEGRSSSSSRKLLDDLTDVKIE) is disordered. Basic and acidic residues predominate over residues 1027-1038 (KLLDDLTDVKIE).

It belongs to the protein kinase superfamily. Ser/Thr protein kinase family.

The protein resides in the membrane. The enzyme catalyses L-seryl-[protein] + ATP = O-phospho-L-seryl-[protein] + ADP + H(+). The catalysed reaction is L-threonyl-[protein] + ATP = O-phospho-L-threonyl-[protein] + ADP + H(+). The protein is Probable LRR receptor-like serine/threonine-protein kinase At1g53430 of Arabidopsis thaliana (Mouse-ear cress).